Here is a 246-residue protein sequence, read N- to C-terminus: Ribosomal RNA small subunit methyltransferase J (246 aa).

S-adenosyl-L-methionine contacts are provided by residues 115–116 and D169; that span reads ER.

This sequence belongs to the methyltransferase superfamily. RsmJ family.

It localises to the cytoplasm. The catalysed reaction is guanosine(1516) in 16S rRNA + S-adenosyl-L-methionine = N(2)-methylguanosine(1516) in 16S rRNA + S-adenosyl-L-homocysteine + H(+). Its function is as follows. Specifically methylates the guanosine in position 1516 of 16S rRNA. The sequence is that of Ribosomal RNA small subunit methyltransferase J from Buchnera aphidicola subsp. Acyrthosiphon pisum (strain Tuc7).